The primary structure comprises 530 residues: UDP-glucuronosyltransferase 1A7 (530 aa).

The signal sequence occupies residues 1–25 (MARAGWTGLLPLYVCLLLTCGFAKA). N-linked (GlcNAc...) asparagine glycosylation is found at Asn-71, Asn-292, and Asn-344. A helical transmembrane segment spans residues 488-504 (VIGFLLAVVLTVAFITF).

This sequence belongs to the UDP-glycosyltransferase family. As to quaternary structure, homodimer. Homooligomer. Interacts with UGT1A1, UGT1A3, UGT1A4, UGT1A6, UGT1A8, UGT1A9 and UGT1A10 to form heterodimers. Isoform 1 interacts with isoform 2/i2 suggesting that oligomerization is involved in negative regulation of transferase activity by isoform 2. Isoform 1 also interacts with respective i2 isoforms of UGT1A1, UGT1A3, UGT1A4, UGT1A6, UGT1A8, UGT1A9 and UGT1A10. In terms of tissue distribution, liver and gastric tissue. Isoform 1 and isoform 2 are expressed in esophagus. Neither isoform is expressed in liver, kidney, colon and small intestine.

The protein localises to the endoplasmic reticulum membrane. It carries out the reaction glucuronate acceptor + UDP-alpha-D-glucuronate = acceptor beta-D-glucuronoside + UDP + H(+). The catalysed reaction is 17alpha-estradiol + UDP-alpha-D-glucuronate = 17alpha-estradiol 3-O-(beta-D-glucuronate) + UDP + H(+). The enzyme catalyses prunetin + UDP-alpha-D-glucuronate = prunetin-5-O-beta-D-glucuronide + UDP. It catalyses the reaction 5-epi-5-F2t-IsoP + UDP-alpha-D-glucuronate = 5-epi-5-F2t-IsoP-glucuronide + UDP + H(+). It carries out the reaction (E)-ferulate + UDP-alpha-D-glucuronate = (E)-ferulic acid beta-D-glucuronate ester + UDP. The catalysed reaction is candesartan + UDP-alpha-D-glucuronate = candesartan O-beta-D-glucuronoside + UDP. The enzyme catalyses SN-38 + UDP-alpha-D-glucuronate = SN-38 O-beta-D-glucuronide + UDP + H(+). It catalyses the reaction mycophenolate + UDP-alpha-D-glucuronate = mycophenolate 7-O-beta-D-glucuronide + UDP + H(+). In terms of biological role, UDP-glucuronosyltransferase (UGT) that catalyzes phase II biotransformation reactions in which lipophilic substrates are conjugated with glucuronic acid to increase the metabolite's water solubility, thereby facilitating excretion into either the urine or bile. Essential for the elimination and detoxification of drugs, xenobiotics and endogenous compounds. Catalyzes the glucuronidation of endogenous estrogen hormone epiestradiol. Involved in the glucuronidation of F2-isoprostane (5-epi-5-F2t-IsoP). Involved in the glucuronidation of the phytochemical ferulic acid at the carboxylic acid group. Also catalyzes the glucuronidation of the isoflavones genistein, daidzein, glycitein, formononetin, biochanin A and prunetin, which are phytoestrogens with anticancer and cardiovascular properties. Involved in the glucuronidation of the AGTR1 angiotensin receptor antagonist caderastan, a drug which can inhibit the effect of angiotensin II. Involved in the biotransformation of 7-ethyl-10-hydroxycamptothecin (SN-38), the pharmacologically active metabolite of the anticancer drug irinotecan. Also metabolizes mycophenolate, an immunosuppressive agent. Lacks UGT glucuronidation activity but acts as a negative regulator of isoform 1. The polypeptide is UDP-glucuronosyltransferase 1A7 (Homo sapiens (Human)).